The chain runs to 205 residues: MSVKLRLRRIGRKKIPVYSIVAADQRNARDGRYIEDIGRYFPLREPAEVRLEEDRALYWLENGAQPSDTVRSILRRRGLLLHHHLKKKGESPGEIESAVEEFRERMAEQGEEVKIAVGTRGQDPLERERERAEEIDEEAQLRAQATPLSAVQEETEAEEAEDVETADAEDADAASETDEPEAAADEADETDASADADDNEEPEDE.

Residues 110–205 form a disordered region; that stretch reads GEEVKIAVGT…ADDNEEPEDE (96 aa). The span at 123–132 shows a compositional bias: basic and acidic residues; sequence DPLERERERA. Acidic residues predominate over residues 153–205; it reads EETEAEEAEDVETADAEDADAASETDEPEAAADEADETDASADADDNEEPEDE.

The protein belongs to the bacterial ribosomal protein bS16 family.

In Salinibacter ruber (strain DSM 13855 / M31), this protein is Small ribosomal subunit protein bS16.